The following is a 115-amino-acid chain: Large ribosomal subunit protein bL21 (115 aa).

Belongs to the bacterial ribosomal protein bL21 family. In terms of assembly, part of the 50S ribosomal subunit. Contacts protein L20.

In terms of biological role, this protein binds to 23S rRNA in the presence of protein L20. The chain is Large ribosomal subunit protein bL21 from Coxiella burnetii (strain RSA 331 / Henzerling II).